The sequence spans 216 residues: Protein-L-isoaspartate O-methyltransferase (216 aa).

Ser-63 is a catalytic residue.

This sequence belongs to the methyltransferase superfamily. L-isoaspartyl/D-aspartyl protein methyltransferase family.

It localises to the cytoplasm. The catalysed reaction is [protein]-L-isoaspartate + S-adenosyl-L-methionine = [protein]-L-isoaspartate alpha-methyl ester + S-adenosyl-L-homocysteine. In terms of biological role, catalyzes the methyl esterification of L-isoaspartyl residues in peptides and proteins that result from spontaneous decomposition of normal L-aspartyl and L-asparaginyl residues. It plays a role in the repair and/or degradation of damaged proteins. The sequence is that of Protein-L-isoaspartate O-methyltransferase from Rhodopseudomonas palustris (strain BisB18).